The chain runs to 374 residues: MRIAVDAMGGDYAPEEIIKGALLAHRQLRVGIALVGRPDSLKPFLPQPLPAGITIVPAEEDVGMAEEPLMVRKKPKASINISMQQVRSNQADAVVAAGNTGAAMAAAYLNLGRLAGIDRPAIGALLPTLKGKPVLLLDVGANVDCRPRFLEQFARMGSLYCQCVLGIEKPRVGLLNIGEEPNKGNDLALATHQRLAQLPGIHFAGNAEGRDVLTGEFDVVVCDGFVGNALLKFAESVGQVITQVLREELPRGWRGKLGCWLLRPNLKQVKRRMDYVEYGGALLLGVNGICVITHGSSKAPMVYHAIRLAKEAAEQKILQRLQAEMVDPREPESNPRRRTRPLQVYSGSGPEVLPLGSLERTSSRCPEPVEDAQP.

The disordered stretch occupies residues 323–374; that stretch reads AEMVDPREPESNPRRRTRPLQVYSGSGPEVLPLGSLERTSSRCPEPVEDAQP. Positions 326–335 are enriched in basic and acidic residues; it reads VDPREPESNP.

Belongs to the PlsX family. In terms of assembly, homodimer. Probably interacts with PlsY.

It localises to the cytoplasm. The catalysed reaction is a fatty acyl-[ACP] + phosphate = an acyl phosphate + holo-[ACP]. It participates in lipid metabolism; phospholipid metabolism. Catalyzes the reversible formation of acyl-phosphate (acyl-PO(4)) from acyl-[acyl-carrier-protein] (acyl-ACP). This enzyme utilizes acyl-ACP as fatty acyl donor, but not acyl-CoA. The protein is Phosphate acyltransferase of Synechococcus sp. (strain JA-2-3B'a(2-13)) (Cyanobacteria bacterium Yellowstone B-Prime).